Here is a 344-residue protein sequence, read N- to C-terminus: N-acetyl-gamma-glutamyl-phosphate reductase (344 aa).

Cys150 is a catalytic residue.

The protein belongs to the NAGSA dehydrogenase family. Type 1 subfamily.

Its subcellular location is the cytoplasm. The enzyme catalyses N-acetyl-L-glutamate 5-semialdehyde + phosphate + NADP(+) = N-acetyl-L-glutamyl 5-phosphate + NADPH + H(+). The protein operates within amino-acid biosynthesis; L-arginine biosynthesis; N(2)-acetyl-L-ornithine from L-glutamate: step 3/4. Its function is as follows. Catalyzes the NADPH-dependent reduction of N-acetyl-5-glutamyl phosphate to yield N-acetyl-L-glutamate 5-semialdehyde. The protein is N-acetyl-gamma-glutamyl-phosphate reductase of Pseudomonas fluorescens (strain SBW25).